The sequence spans 208 residues: MENSEKLANSKEVIAYIAERFPKCFILEGEAKPLKIGIFQDLAERLSDDPKVSKTQLRAGLRQYTSSWRYLHGVKPGASRVDLDGNPCGELEEEHIEHAKATLEESKAKVATRRKEQAKKAREEAKAKKTARAATPPKRRPQPAAKKVEQPVETRALNADEITVGNNVSVNMGKGNMPATIVEINKDDVRIRLSNGLQMVVKAENLRS.

Over residues 106-127 (SKAKVATRRKEQAKKAREEAKA) the composition is skewed to basic and acidic residues. The interval 106-154 (SKAKVATRRKEQAKKAREEAKAKKTARAATPPKRRPQPAAKKVEQPVET) is disordered.

This sequence belongs to the ProQ family.

The protein localises to the cytoplasm. Its function is as follows. RNA chaperone with significant RNA binding, RNA strand exchange and RNA duplexing activities. The polypeptide is RNA chaperone ProQ (Aliivibrio fischeri (strain ATCC 700601 / ES114) (Vibrio fischeri)).